The chain runs to 415 residues: Phakinin (415 aa).

The interval 1 to 26 is disordered; that stretch reads MSTRRVVVDAPAGASSSMPLQRHKAS. Ser2 is subject to N-acetylserine. The interval 2–114 is head; sequence STRRVVVDAP…LGAVEDLGGC (113 aa). Phosphoserine is present on residues Ser26, Ser32, and Ser35. Phosphothreonine is present on Thr53. A phosphoserine mark is found at Ser90 and Ser100. An IF rod domain is found at 104-415; the sequence is DLGAVEDLGG…HALLDREESS (312 aa). Coiled coils occupy residues 115–144, 199–248, and 295–395; these read LVEYMAKVHALEKVSQELEAQLRMHLESKA, RKAA…VKML, and QAKQ…LSHK. Residues 396–415 form a tail region; sequence CQLQRDVASYHALLDREESS.

This sequence belongs to the intermediate filament family. As to quaternary structure, part of a complex required for lens intermediate filament formation composed of BFSP1, BFSP2 and CRYAA. Found in a complex composed of PPL (via C-terminal linker domain), BFSP1 and BFSP2 in the retinal lens. Within the complex interacts with PPL (via C-terminal linker domain) and with BFSP1. Identified in a complex that contains VIM, EZR, AHNAK, BFSP1, BFSP2, ANK2, PLEC, PRX and spectrin. Interacts with LGSN. Interacts with VIM. In terms of tissue distribution, abundantly expressed in both the inner and outer cortex of the retina, expressed at a lower level in the nucleus of the retina (at protein level). Detected in eye lens fiber cells (at protein level).

Its subcellular location is the cell membrane. It is found in the cytoplasm. It localises to the cytoskeleton. The protein localises to the cell cortex. In terms of biological role, required for the correct formation of lens intermediate filaments as part of a complex composed of BFSP1, BFSP2 and CRYAA. Plays a role in maintenance of retinal lens optical clarity. The polypeptide is Phakinin (BFSP2) (Bos taurus (Bovine)).